The chain runs to 191 residues: UPF0228 protein MM_1428 (191 aa).

It belongs to the UPF0228 family.

In Methanosarcina mazei (strain ATCC BAA-159 / DSM 3647 / Goe1 / Go1 / JCM 11833 / OCM 88) (Methanosarcina frisia), this protein is UPF0228 protein MM_1428.